Consider the following 144-residue polypeptide: MSEEQEPKTSEAEYGTMDFPEFENEEEWLFKVLGIKPRPSSDLDDADKQEDEPLGHTEFLRLQDILQEDKVSSTNDSDTCQAGYTEENDEASHSDSDIDDNVNVIIGDIKANSSMYMEMFTNMNSQADQDLKLTESDNAMYPTD.

A disordered region spans residues 67–99 (QEDKVSSTNDSDTCQAGYTEENDEASHSDSDID). Positions 72 to 82 (SSTNDSDTCQA) are enriched in polar residues.

In terms of tissue distribution, testis.

May have an RNA/DNA binding role. The polypeptide is Testis-specific protein TSX (Tsx) (Rattus norvegicus (Rat)).